Consider the following 360-residue polypeptide: Histidinol-phosphate aminotransferase (360 aa).

Lys211 is subject to N6-(pyridoxal phosphate)lysine.

It belongs to the class-II pyridoxal-phosphate-dependent aminotransferase family. Histidinol-phosphate aminotransferase subfamily. As to quaternary structure, homodimer. Requires pyridoxal 5'-phosphate as cofactor.

The enzyme catalyses L-histidinol phosphate + 2-oxoglutarate = 3-(imidazol-4-yl)-2-oxopropyl phosphate + L-glutamate. The protein operates within amino-acid biosynthesis; L-histidine biosynthesis; L-histidine from 5-phospho-alpha-D-ribose 1-diphosphate: step 7/9. The chain is Histidinol-phosphate aminotransferase from Cronobacter sakazakii (strain ATCC BAA-894) (Enterobacter sakazakii).